The chain runs to 210 residues: Pyridoxine/pyridoxamine 5'-phosphate oxidase (210 aa).

Residues 7 to 10 (RDEY) and K65 contribute to the substrate site. FMN is bound by residues 60–65 (RMVLLK), 75–76 (FT), R81, K82, and Q104. Y122, R126, and S130 together coordinate substrate. Residues 139–140 (QS) and W183 contribute to the FMN site. 189–191 (RLH) serves as a coordination point for substrate. An FMN-binding site is contributed by R193.

The protein belongs to the pyridoxamine 5'-phosphate oxidase family. As to quaternary structure, homodimer. FMN is required as a cofactor.

The catalysed reaction is pyridoxamine 5'-phosphate + O2 + H2O = pyridoxal 5'-phosphate + H2O2 + NH4(+). It catalyses the reaction pyridoxine 5'-phosphate + O2 = pyridoxal 5'-phosphate + H2O2. The protein operates within cofactor metabolism; pyridoxal 5'-phosphate salvage; pyridoxal 5'-phosphate from pyridoxamine 5'-phosphate: step 1/1. It participates in cofactor metabolism; pyridoxal 5'-phosphate salvage; pyridoxal 5'-phosphate from pyridoxine 5'-phosphate: step 1/1. Its function is as follows. Catalyzes the oxidation of either pyridoxine 5'-phosphate (PNP) or pyridoxamine 5'-phosphate (PMP) into pyridoxal 5'-phosphate (PLP). This is Pyridoxine/pyridoxamine 5'-phosphate oxidase from Haemophilus influenzae (strain ATCC 51907 / DSM 11121 / KW20 / Rd).